The primary structure comprises 203 residues: Recombination protein RecR (203 aa).

The segment at 56–71 (CTVCGNVSDDERCRIC) adopts a C4-type zinc-finger fold. A Toprim domain is found at 79–179 (SVVCVVEEPK…TVTRIASGLP (101 aa)).

It belongs to the RecR family.

May play a role in DNA repair. It seems to be involved in an RecBC-independent recombinational process of DNA repair. It may act with RecF and RecO. In Mycobacterium leprae (strain TN), this protein is Recombination protein RecR.